The chain runs to 232 residues: Cytidylate kinase (232 aa).

19 to 27 (GPAGVGKTT) contacts ATP.

This sequence belongs to the cytidylate kinase family. Type 1 subfamily.

The protein resides in the cytoplasm. It catalyses the reaction CMP + ATP = CDP + ADP. The enzyme catalyses dCMP + ATP = dCDP + ADP. This Nitratidesulfovibrio vulgaris (strain ATCC 29579 / DSM 644 / CCUG 34227 / NCIMB 8303 / VKM B-1760 / Hildenborough) (Desulfovibrio vulgaris) protein is Cytidylate kinase.